The chain runs to 95 residues: Co-chaperonin GroES (95 aa).

Belongs to the GroES chaperonin family. In terms of assembly, heptamer of 7 subunits arranged in a ring. Interacts with the chaperonin GroEL.

It localises to the cytoplasm. Functionally, together with the chaperonin GroEL, plays an essential role in assisting protein folding. The GroEL-GroES system forms a nano-cage that allows encapsulation of the non-native substrate proteins and provides a physical environment optimized to promote and accelerate protein folding. GroES binds to the apical surface of the GroEL ring, thereby capping the opening of the GroEL channel. This is Co-chaperonin GroES from Desulfotalea psychrophila (strain LSv54 / DSM 12343).